The sequence spans 498 residues: Probable cytosol aminopeptidase (498 aa).

The Mn(2+) site is built by Lys-262 and Asp-267. Residue Lys-274 is part of the active site. Positions 285, 344, and 346 each coordinate Mn(2+). The active site involves Arg-348.

It belongs to the peptidase M17 family. Requires Mn(2+) as cofactor.

It localises to the cytoplasm. The enzyme catalyses Release of an N-terminal amino acid, Xaa-|-Yaa-, in which Xaa is preferably Leu, but may be other amino acids including Pro although not Arg or Lys, and Yaa may be Pro. Amino acid amides and methyl esters are also readily hydrolyzed, but rates on arylamides are exceedingly low.. It carries out the reaction Release of an N-terminal amino acid, preferentially leucine, but not glutamic or aspartic acids.. Presumably involved in the processing and regular turnover of intracellular proteins. Catalyzes the removal of unsubstituted N-terminal amino acids from various peptides. In Phytoplasma mali (strain AT), this protein is Probable cytosol aminopeptidase.